Reading from the N-terminus, the 318-residue chain is Carnitine monooxygenase reductase subunit (318 aa).

An FAD-binding FR-type domain is found at 5–107 (YEMFPAVVTR…SEPKNLFPLA (103 aa)). In terms of domain architecture, 2Fe-2S ferredoxin-type spans 233 to 318 (FTVVLAKSNQ…AKGKKLVLDL (86 aa)). The [2Fe-2S] cluster site is built by cysteine 267, cysteine 272, cysteine 275, and cysteine 305.

The protein belongs to the PDR/VanB family. CntB subfamily. Composed of an oxygenase subunit (cntA) and a reductase subunit (cntB). FMN is required as a cofactor. Requires [2Fe-2S] cluster as cofactor.

The catalysed reaction is (R)-carnitine + NADH + O2 + H(+) = (3R)-3-hydroxy-4-oxobutanoate + trimethylamine + NAD(+) + H2O. It catalyses the reaction (R)-carnitine + NADPH + O2 + H(+) = (3R)-3-hydroxy-4-oxobutanoate + trimethylamine + NADP(+) + H2O. The protein operates within amine and polyamine metabolism; carnitine metabolism. Functionally, converts carnitine to trimethylamine and malic semialdehyde. The sequence is that of Carnitine monooxygenase reductase subunit from Acinetobacter baumannii (strain ATCC 19606 / DSM 30007 / JCM 6841 / CCUG 19606 / CIP 70.34 / NBRC 109757 / NCIMB 12457 / NCTC 12156 / 81).